A 721-amino-acid polypeptide reads, in one-letter code: WD repeat and coiled-coil-containing protein (721 aa).

Met1 carries the N-acetylmethionine modification. WD repeat units follow at residues 55 to 98 (GQFE…MESS) and 154 to 194 (NTQG…LHRC). A phosphoserine mark is found at Ser299, Ser468, Ser501, and Ser523. Polar residues predominate over residues 520–537 (QPASLPRHSSTPDHTSTL). The interval 520 to 553 (QPASLPRHSSTPDHTSTLEPPRLPQRKNLQSEKE) is disordered. Position 530 is a phosphothreonine (Thr530). The tract at residues 539 to 545 (PPRLPQR) is interaction with HCK. Residues 556–584 (QLSKEVEILSRNLVEMQRCLSELTNRLHN) are a coiled coil. Phosphoserine occurs at positions 686 and 690.

In terms of assembly, oligomer. Interacts with HCK (via SH3 domain). In terms of processing, phosphorylated on Tyr when associated with HCK.

The protein is WD repeat and coiled-coil-containing protein of Homo sapiens (Human).